The following is a 360-amino-acid chain: N-acetylmuramoyl-L-alanine amidase CwlL (360 aa).

An N-terminal signal peptide occupies residues 1-39 (MVKVVKNFVKVNQYTRPGLKLAGVKGIVMHYTATPGASA). In terms of domain architecture, N-acetylmuramoyl-L-alanine amidase spans 40–154 (LNERDYFNGT…DVTNKICPAP (115 aa)). 4 consecutive repeat copies span residues 166–191 (RKKVDSLLGNKTVSKTTSSTSQSSKS), 196–259 (LKKG…EKAL), 265–289 (KKKKPSSNGKKTSYPLPSGIYKVKS), and 291–355 (LMKG…KAKL). 2 2 X approximate repeats regions span residues 166-289 (RKKV…KVKS) and 196-355 (LKKG…KAKL).

The protein belongs to the N-acetylmuramoyl-L-alanine amidase 2 family.

Its subcellular location is the secreted. It carries out the reaction Hydrolyzes the link between N-acetylmuramoyl residues and L-amino acid residues in certain cell-wall glycopeptides.. The protein is N-acetylmuramoyl-L-alanine amidase CwlL (cwlL) of Bacillus licheniformis.